Consider the following 551-residue polypeptide: HTH-type transcriptional regulator SgrR (551 aa).

An HTH marR-type domain is found at Met-1–Arg-116. Residues Leu-26–Asp-49 constitute a DNA-binding region (H-T-H motif). Positions Glu-163–Trp-492 are solute-binding.

Its function is as follows. Activates the small RNA gene sgrS under glucose-phosphate stress conditions as well as yfdZ. Represses its own transcription under both stress and non-stress conditions. Might act as a sensor of the intracellular accumulation of phosphoglucose by binding these molecules in its C-terminal solute-binding domain. This is HTH-type transcriptional regulator SgrR from Shigella boydii serotype 4 (strain Sb227).